We begin with the raw amino-acid sequence, 498 residues long: Hexokinase-1 (498 aa).

A helical membrane pass occupies residues 4–24 (VTVGAAVVGAAAVCAVAALIV). Positions 35–488 (GRAMAILREF…SGIGAALLRA (454 aa)) constitute a Hexokinase domain. The hexokinase small subdomain stretch occupies residues 89 to 228 (QLVMKLGVFY…VLDMRVSALV (140 aa)). ADP contacts are provided by glycine 104, threonine 105, and asparagine 106. The D-glucose site is built by threonine 194, lysine 195, asparagine 229, and aspartate 230. The tract at residues 229–477 (NDTVGTLAGG…TSIVFVHSND (249 aa)) is hexokinase large subdomain. Threonine 253 contacts ADP. Positions 256, 284, and 315 each coordinate D-glucose. ADP is bound at residue glycine 442.

This sequence belongs to the hexokinase family. In terms of tissue distribution, expressed in young and mature leaves, stems, roots, stolons, and developing and mature tubers.

It localises to the plastid. Its subcellular location is the chloroplast outer membrane. It catalyses the reaction a D-hexose + ATP = a D-hexose 6-phosphate + ADP + H(+). The enzyme catalyses D-fructose + ATP = D-fructose 6-phosphate + ADP + H(+). The catalysed reaction is D-glucose + ATP = D-glucose 6-phosphate + ADP + H(+). It participates in carbohydrate metabolism; hexose metabolism. The protein operates within carbohydrate degradation; glycolysis; D-glyceraldehyde 3-phosphate and glycerone phosphate from D-glucose: step 1/4. In terms of biological role, fructose and glucose phosphorylating enzyme. May be involved in the phosphorylation of glucose during the export from plastids to cytosol. Seems neither to be involved in cell sugar sensing nor in carbohydrate metabolism in tuber. This chain is Hexokinase-1 (HXK1), found in Solanum tuberosum (Potato).